A 117-amino-acid polypeptide reads, in one-letter code: MAGLVKLSCLVLACMIVAGPIATNAALSCGTVSGNLAACIGYLTQNGPVPTACCSGVTSLNNMARTTPDRQQACRCLVGAANALPTINVARAAGLPKACGVNIPYKISKTTNCNSVK.

Positions 1 to 25 (MAGLVKLSCLVLACMIVAGPIATNA) are cleaved as a signal peptide. Intrachain disulfides connect C29-C76, C39-C53, C54-C99, and C74-C113.

The protein belongs to the plant LTP family.

Its function is as follows. Plant non-specific lipid-transfer proteins transfer phospholipids as well as galactolipids across membranes. May play a role in wax or cutin deposition in the cell walls of expanding epidermal cells and certain secretory tissues. This is Non-specific lipid-transfer protein 3 (LTP3) from Brassica napus (Rape).